Here is a 61-residue protein sequence, read N- to C-terminus: Metallothionein-1E (61 aa).

Met-1 carries the post-translational modification N-acetylmethionine. Positions 1 to 29 are beta; the sequence is MDPNCSCPTGGSCSCAGSCTCKACRCTSC. The a divalent metal cation site is built by Cys-5, Cys-7, Cys-13, Cys-15, Cys-19, Cys-21, Cys-24, Cys-26, Cys-29, Cys-33, Cys-34, Cys-36, Cys-37, Cys-41, Cys-44, Cys-48, Cys-50, Cys-57, Cys-59, and Cys-60. The alpha stretch occupies residues 30-61; sequence KKSCCSCCPVGCAKCAQGCICKGASDKCSCCA.

This sequence belongs to the metallothionein superfamily. Type 1 family. As to quaternary structure, monomer.

Its function is as follows. Metallothioneins have a high content of cysteine residues that bind various heavy metals; these proteins are transcriptionally regulated by both heavy metals and glucocorticoids. In Sus scrofa (Pig), this protein is Metallothionein-1E (MT1E).